Consider the following 595-residue polypeptide: Tectonic-3 (595 aa).

Positions 1 to 22 (MCTLQLHLLLLVVLMLSETARP) are cleaved as a signal peptide. Residues 23–62 (QPSSTARAFPTSWGLEPVTPEVPTSAPPDSSESPTPWTLS) form a disordered region. The Extracellular segment spans residues 23–575 (QPSSTARAFP…ALSRGASVQK (553 aa)). A compositionally biased stretch (polar residues) spans 49 to 62 (PPDSSESPTPWTLS). Residues Asn-167 and Asn-336 are each glycosylated (N-linked (GlcNAc...) asparagine). Residues 576–594 (DSLVLILCVLLLGLLNSQT) form a helical membrane-spanning segment. Lys-595 is a topological domain (cytoplasmic).

Belongs to the tectonic family. In terms of assembly, part of the tectonic-like complex (also named B9 complex).

Its subcellular location is the membrane. In terms of biological role, part of the tectonic-like complex which is required for tissue-specific ciliogenesis and may regulate ciliary membrane composition. May be involved in apoptosis regulation. Necessary for signal transduction through the sonic hedgehog (Shh) signaling pathway. This chain is Tectonic-3 (Tctn3), found in Mus musculus (Mouse).